The following is a 257-amino-acid chain: Dihydroorotate dehydrogenase B (NAD(+)), electron transfer subunit (257 aa).

The 101-residue stretch at 2–102 (IGRERMTVAS…LGPLGNGFPL (101 aa)) folds into the FAD-binding FR-type domain. Residues 53–56 (RPLS), 70–72 (IYR), and 77–78 (GT) contribute to the FAD site. Residues Cys221, Cys226, Cys229, and Cys244 each contribute to the [2Fe-2S] cluster site.

Belongs to the PyrK family. In terms of assembly, heterotetramer of 2 PyrK and 2 PyrD type B subunits. The cofactor is [2Fe-2S] cluster. Requires FAD as cofactor.

It participates in pyrimidine metabolism; UMP biosynthesis via de novo pathway; orotate from (S)-dihydroorotate (NAD(+) route): step 1/1. In terms of biological role, responsible for channeling the electrons from the oxidation of dihydroorotate from the FMN redox center in the PyrD type B subunit to the ultimate electron acceptor NAD(+). The polypeptide is Dihydroorotate dehydrogenase B (NAD(+)), electron transfer subunit (Geobacillus kaustophilus (strain HTA426)).